A 283-amino-acid chain; its full sequence is Pantothenate synthetase (283 aa).

30 to 37 (MGNLHQGH) lines the ATP pocket. The active-site Proton donor is the histidine 37. Residue glutamine 61 participates in (R)-pantoate binding. Beta-alanine is bound at residue glutamine 61. 149-152 (GEKD) serves as a coordination point for ATP. Glutamine 155 contributes to the (R)-pantoate binding site. Residues valine 178 and 186 to 189 (FSSR) each bind ATP.

The protein belongs to the pantothenate synthetase family. As to quaternary structure, homodimer.

It is found in the cytoplasm. The catalysed reaction is (R)-pantoate + beta-alanine + ATP = (R)-pantothenate + AMP + diphosphate + H(+). It participates in cofactor biosynthesis; (R)-pantothenate biosynthesis; (R)-pantothenate from (R)-pantoate and beta-alanine: step 1/1. In terms of biological role, catalyzes the condensation of pantoate with beta-alanine in an ATP-dependent reaction via a pantoyl-adenylate intermediate. The protein is Pantothenate synthetase of Proteus mirabilis (strain HI4320).